Consider the following 49-residue polypeptide: Large ribosomal subunit protein bL33B (49 aa).

This sequence belongs to the bacterial ribosomal protein bL33 family.

The polypeptide is Large ribosomal subunit protein bL33B (Latilactobacillus sakei subsp. sakei (strain 23K) (Lactobacillus sakei subsp. sakei)).